The chain runs to 501 residues: Flagellin (501 aa).

The protein belongs to the bacterial flagellin family.

It is found in the secreted. It localises to the bacterial flagellum. Flagellin is the subunit protein which polymerizes to form the filaments of bacterial flagella. The sequence is that of Flagellin (flaA) from Aquifex pyrophilus.